Here is a 311-residue protein sequence, read N- to C-terminus: 4-hydroxy-tetrahydrodipicolinate synthase (311 aa).

Thr-51 provides a ligand contact to pyruvate. Tyr-140 (proton donor/acceptor) is an active-site residue. Lys-168 serves as the catalytic Schiff-base intermediate with substrate. Residue Ile-209 coordinates pyruvate.

The protein belongs to the DapA family. In terms of assembly, homotetramer; dimer of dimers.

Its subcellular location is the cytoplasm. The enzyme catalyses L-aspartate 4-semialdehyde + pyruvate = (2S,4S)-4-hydroxy-2,3,4,5-tetrahydrodipicolinate + H2O + H(+). It functions in the pathway amino-acid biosynthesis; L-lysine biosynthesis via DAP pathway; (S)-tetrahydrodipicolinate from L-aspartate: step 3/4. Catalyzes the condensation of (S)-aspartate-beta-semialdehyde [(S)-ASA] and pyruvate to 4-hydroxy-tetrahydrodipicolinate (HTPA). The polypeptide is 4-hydroxy-tetrahydrodipicolinate synthase (Streptococcus gordonii (strain Challis / ATCC 35105 / BCRC 15272 / CH1 / DL1 / V288)).